Here is a 437-residue protein sequence, read N- to C-terminus: Methylenetetrahydrofolate--tRNA-(uracil-5-)-methyltransferase TrmFO (437 aa).

Residue 10-15 (GAGLAG) coordinates FAD.

It belongs to the MnmG family. TrmFO subfamily. The cofactor is FAD.

It is found in the cytoplasm. The enzyme catalyses uridine(54) in tRNA + (6R)-5,10-methylene-5,6,7,8-tetrahydrofolate + NADH + H(+) = 5-methyluridine(54) in tRNA + (6S)-5,6,7,8-tetrahydrofolate + NAD(+). It catalyses the reaction uridine(54) in tRNA + (6R)-5,10-methylene-5,6,7,8-tetrahydrofolate + NADPH + H(+) = 5-methyluridine(54) in tRNA + (6S)-5,6,7,8-tetrahydrofolate + NADP(+). Functionally, catalyzes the folate-dependent formation of 5-methyl-uridine at position 54 (M-5-U54) in all tRNAs. In Brevibacillus brevis (strain 47 / JCM 6285 / NBRC 100599), this protein is Methylenetetrahydrofolate--tRNA-(uracil-5-)-methyltransferase TrmFO.